An 886-amino-acid chain; its full sequence is Kinesin-like protein KIF18A (886 aa).

The 345-residue stretch at 11 to 355 (RMKVVVRVRP…LKYANRAKEI (345 aa)) folds into the Kinesin motor domain. Lys-24 participates in a covalent cross-link: Glycyl lysine isopeptide (Lys-Gly) (interchain with G-Cter in SUMO2). 113-120 (GATGSGKT) serves as a coordination point for ATP. Positions 370-404 (ISQYVKICNMQKAEILMLKEKLKAYEEQKALSDRN) form a coiled coil. The residue at position 674 (Ser-674) is a Phosphoserine. Lys-683 is covalently cross-linked (Glycyl lysine isopeptide (Lys-Gly) (interchain with G-Cter in SUMO2)). Phosphoserine is present on Ser-695. Residues 774–804 (EQEPLASSKSSVHRIESSSFSTKDSMPESAG) are disordered. Lys-782 is covalently cross-linked (Glycyl lysine isopeptide (Lys-Gly) (interchain with G-Cter in SUMO2)). Phosphoserine is present on Ser-826. Lys-862 participates in a covalent cross-link: Glycyl lysine isopeptide (Lys-Gly) (interchain with G-Cter in SUMO2). Residues 862-886 (KRNTNKTNSNMLRKFRRNTSKENVQ) form a disordered region.

Belongs to the TRAFAC class myosin-kinesin ATPase superfamily. Kinesin family. In terms of assembly, interacts with CENPE and ESR1. In terms of processing, glycosylated. Post-translationally, ubiquitinated.

Its subcellular location is the cell projection. It localises to the ruffle. The protein resides in the cytoplasm. It is found in the nucleus. The protein localises to the cytoskeleton. Its subcellular location is the microtubule organizing center. It localises to the centrosome. Microtubule-depolymerizing kinesin which plays a role in chromosome congression by reducing the amplitude of preanaphase oscillations and slowing poleward movement during anaphase, thus suppressing chromosome movements. May stabilize the CENPE-BUB1B complex at the kinetochores during early mitosis and maintains CENPE levels at kinetochores during chromosome congression. The sequence is that of Kinesin-like protein KIF18A (Kif18a) from Mus musculus (Mouse).